The primary structure comprises 510 residues: Putative glycerol-3-phosphate transporter 3 (510 aa).

Transmembrane regions (helical) follow at residues 31 to 51 (LSFK…YIAF), 91 to 111 (ALLG…MFVA), 123 to 143 (FLTI…VAFW), 158 to 178 (LAGW…GNWF), 185 to 205 (VIMG…TLIA), 217 to 237 (FVGP…FLPV), 279 to 299 (VGFL…CLFF), 331 to 351 (GNLS…AGYF), 355 to 375 (LDGR…ALFL), 378 to 398 (IYGH…GLFV), 436 to 456 (TGSV…AISW), and 459 to 479 (VFYM…TLII).

Belongs to the major facilitator superfamily. Organophosphate:Pi antiporter (OPA) (TC 2.A.1.4) family.

Its subcellular location is the membrane. The chain is Putative glycerol-3-phosphate transporter 3 from Arabidopsis thaliana (Mouse-ear cress).